The following is a 984-amino-acid chain: Probable serine/threonine-protein kinase ireA (984 aa).

Residues 1–26 (MTFSKTRNKIIFLLFLIIINIFNINA) form the signal peptide. Residues 27-436 (YIKDENEDDL…NDLLDSNKLK (410 aa)) lie on the Extracellular side of the membrane. 2 disordered regions span residues 70 to 91 (YSTS…EITK) and 137 to 157 (EDKS…DENK). Low complexity-rich tracts occupy residues 82–91 (STSTSTEITK) and 141–150 (STSSTSTTSE). N-linked (GlcNAc...) asparagine glycosylation occurs at N228. Positions 352–427 (SPPSNNNNNN…GANNNNNNNN (76 aa)) are disordered. Low complexity predominate over residues 356 to 397 (NNNNNNNNNNNNNNNNNNNNNNNNNNNNNNNNNNKNNNNNNK). N-linked (GlcNAc...) asparagine glycosylation occurs at N398. Residues 437 to 457 (NYDIYLYSSIVILITSIIVFI) traverse the membrane as a helical segment. The Cytoplasmic portion of the chain corresponds to 458–984 (RSKKNFNLIN…NDQYFVQYYY (527 aa)). A coiled-coil region spans residues 467–533 (NVNNNNNQNN…NDLIDEFIST (67 aa)). Residues 472–489 (NNQNNNQNSNQNNNINNK) show a composition bias toward low complexity. Residues 472 to 518 (NNQNNNQNSNQNNNINNKKTPKKKKKKQKNKNNKNNNDEDDENEIEN) are disordered. Residues 490–503 (KTPKKKKKKQKNKN) are compositionally biased toward basic residues. A compositionally biased stretch (acidic residues) spans 509–518 (DEDDENEIEN). A Protein kinase domain is found at 575–851 (IITNKILGTG…IGECINHPFF (277 aa)). Residues 581 to 589 (LGTGSCGTI) and K603 each bind ATP. The span at 667-676 (PTDSPSIQSS) shows a compositional bias: polar residues. The tract at residues 667 to 692 (PTDSPSIQSSNNNGNGNNGNNNNNNQ) is disordered. Residues 677–691 (NNNGNGNNGNNNNNN) are compositionally biased toward low complexity. D722 serves as the catalytic Proton acceptor. One can recognise a KEN domain in the interval 854–984 (VHKKLSFLVA…NDQYFVQYYY (131 aa)).

It belongs to the protein kinase superfamily. Ser/Thr protein kinase family.

Its subcellular location is the membrane. The catalysed reaction is L-seryl-[protein] + ATP = O-phospho-L-seryl-[protein] + ADP + H(+). The enzyme catalyses L-threonyl-[protein] + ATP = O-phospho-L-threonyl-[protein] + ADP + H(+). This Dictyostelium discoideum (Social amoeba) protein is Probable serine/threonine-protein kinase ireA (ireA).